The sequence spans 198 residues: Na(+)-translocating NADH-quinone reductase subunit E (198 aa).

6 consecutive transmembrane segments (helical) span residues serine 11 to valine 31, valine 35 to alanine 55, phenylalanine 77 to isoleucine 97, glycine 110 to valine 130, valine 140 to leucine 160, and leucine 176 to isoleucine 196.

Belongs to the NqrDE/RnfAE family. As to quaternary structure, composed of six subunits; NqrA, NqrB, NqrC, NqrD, NqrE and NqrF.

The protein resides in the cell inner membrane. The enzyme catalyses a ubiquinone + n Na(+)(in) + NADH + H(+) = a ubiquinol + n Na(+)(out) + NAD(+). Functionally, NQR complex catalyzes the reduction of ubiquinone-1 to ubiquinol by two successive reactions, coupled with the transport of Na(+) ions from the cytoplasm to the periplasm. NqrA to NqrE are probably involved in the second step, the conversion of ubisemiquinone to ubiquinol. The protein is Na(+)-translocating NADH-quinone reductase subunit E of Actinobacillus pleuropneumoniae serotype 5b (strain L20).